Here is a 238-residue protein sequence, read N- to C-terminus: Large ribosomal subunit protein uL1 (238 aa).

This sequence belongs to the universal ribosomal protein uL1 family. In terms of assembly, part of the 50S ribosomal subunit.

In terms of biological role, binds directly to 23S rRNA. The L1 stalk is quite mobile in the ribosome, and is involved in E site tRNA release. Protein L1 is also a translational repressor protein, it controls the translation of the L11 operon by binding to its mRNA. The polypeptide is Large ribosomal subunit protein uL1 (Trichodesmium erythraeum (strain IMS101)).